A 291-amino-acid polypeptide reads, in one-letter code: Pyridoxal 5'-phosphate synthase subunit PdxS (291 aa).

D23 serves as a coordination point for D-ribose 5-phosphate. The active-site Schiff-base intermediate with D-ribose 5-phosphate is K80. G152 provides a ligand contact to D-ribose 5-phosphate. R164 is a binding site for D-glyceraldehyde 3-phosphate. D-ribose 5-phosphate is bound by residues G213 and 234–235; that span reads GS.

Belongs to the PdxS/SNZ family. In terms of assembly, in the presence of PdxT, forms a dodecamer of heterodimers.

The catalysed reaction is aldehydo-D-ribose 5-phosphate + D-glyceraldehyde 3-phosphate + L-glutamine = pyridoxal 5'-phosphate + L-glutamate + phosphate + 3 H2O + H(+). Its pathway is cofactor biosynthesis; pyridoxal 5'-phosphate biosynthesis. Catalyzes the formation of pyridoxal 5'-phosphate from ribose 5-phosphate (RBP), glyceraldehyde 3-phosphate (G3P) and ammonia. The ammonia is provided by the PdxT subunit. Can also use ribulose 5-phosphate and dihydroxyacetone phosphate as substrates, resulting from enzyme-catalyzed isomerization of RBP and G3P, respectively. In Desulfitobacterium hafniense (strain DSM 10664 / DCB-2), this protein is Pyridoxal 5'-phosphate synthase subunit PdxS.